The sequence spans 132 residues: Fatty acid-binding protein, adipocyte (132 aa).

A Nuclear localization signal motif is present at residues 22–32 (KELGVGFATRK). Residues Arg107 and Arg127 each coordinate (9Z,12Z)-octadecadienoate.

It belongs to the calycin superfamily. Fatty-acid binding protein (FABP) family. Monomer.

It localises to the cytoplasm. The protein resides in the nucleus. Lipid transport protein in adipocytes. Binds both long chain fatty acids and retinoic acid. Delivers long-chain fatty acids and retinoic acid to their cognate receptors in the nucleus. Has the highest binding affinity for linoleic acid and decreasing relative affinity for eicosapentaenoic acid (EPA), alpha-linolenic acid (ALA), docosahexaenoic acid (DHA), oleic acid, palmitic acid and stearic acid, respectively. This Pygoscelis papua (Gentoo penguin) protein is Fatty acid-binding protein, adipocyte.